The primary structure comprises 395 residues: Dual specificity mitogen-activated protein kinase kinase 1 (395 aa).

Positions 1–24 (MPKKKPTPIQLNPNPEGTAVNGTP) are disordered. Polar residues predominate over residues 9 to 24 (IQLNPNPEGTAVNGTP). The Protein kinase domain occupies 68 to 363 (FEKVSELGAG…LKQLMVHSFI (296 aa)). ATP is bound by residues 74-82 (LGAGNGGVV) and Lys-97. Asp-190 functions as the Proton acceptor in the catalytic mechanism. 2 positions are modified to phosphoserine; by RAF: Ser-218 and Ser-222. The disordered stretch occupies residues 284-305 (ASSELAPRPRPPGRPISSYGPD).

Belongs to the protein kinase superfamily. STE Ser/Thr protein kinase family. MAP kinase kinase subfamily. In terms of processing, activated by phosphorylation on Ser/Thr catalyzed by MAP kinase kinase kinases (RAF or MOS). As to expression, expressed in the central nervous system, kidney, liver, intestine and the hematopoietic system.

It localises to the cytoplasm. The protein localises to the cytoskeleton. Its subcellular location is the microtubule organizing center. It is found in the centrosome. The protein resides in the spindle pole body. It localises to the nucleus. The enzyme catalyses L-seryl-[protein] + ATP = O-phospho-L-seryl-[protein] + ADP + H(+). It carries out the reaction L-threonyl-[protein] + ATP = O-phospho-L-threonyl-[protein] + ADP + H(+). It catalyses the reaction L-tyrosyl-[protein] + ATP = O-phospho-L-tyrosyl-[protein] + ADP + H(+). In terms of biological role, dual specificity protein kinase which acts as an essential component of the MAP kinase signal transduction pathway. Binding of extracellular ligands such as growth factors, cytokines and hormones to their cell-surface receptors activates the MAPK/ERK cascade, ultimately leading to phosphorylation of a threonine and a tyrosine residue in a Thr-Glu-Tyr sequence located in MAP kinases. Depending on the cellular context, this pathway mediates diverse biological functions such as cell growth, adhesion, survival and differentiation predominantly through the regulation of transcription, metabolism and cytoskeletal rearrangements. This chain is Dual specificity mitogen-activated protein kinase kinase 1 (map2k1), found in Xenopus laevis (African clawed frog).